A 506-amino-acid chain; its full sequence is Probable Xaa-Pro aminopeptidase BDBG_08406 (506 aa).

Asp285, Asp296, Glu433, and Glu471 together coordinate Mn(2+).

The protein belongs to the peptidase M24B family. Requires Mn(2+) as cofactor.

The enzyme catalyses Release of any N-terminal amino acid, including proline, that is linked to proline, even from a dipeptide or tripeptide.. Its function is as follows. Catalyzes the removal of a penultimate prolyl residue from the N-termini of peptides. The chain is Probable Xaa-Pro aminopeptidase BDBG_08406 from Blastomyces gilchristii (strain SLH14081) (Blastomyces dermatitidis).